Here is a 372-residue protein sequence, read N- to C-terminus: Chaperone protein DnaJ (372 aa).

One can recognise a J domain in the interval 5–69 (DYYEVLGLSK…QKKAQYDQFG (65 aa)). The CR-type zinc-finger motif lies at 129–211 (GAEKEISVKK…CGGTGRKVKT (83 aa)). C142, C145, C159, C162, C185, C188, C199, and C202 together coordinate Zn(2+). CXXCXGXG motif repeat units follow at residues 142-149 (CDTCDGSG), 159-166 (CSTCGGRG), 185-192 (CPDCGGTG), and 199-206 (CSDCGGTG).

This sequence belongs to the DnaJ family. As to quaternary structure, homodimer. It depends on Zn(2+) as a cofactor.

It is found in the cytoplasm. In terms of biological role, participates actively in the response to hyperosmotic and heat shock by preventing the aggregation of stress-denatured proteins and by disaggregating proteins, also in an autonomous, DnaK-independent fashion. Unfolded proteins bind initially to DnaJ; upon interaction with the DnaJ-bound protein, DnaK hydrolyzes its bound ATP, resulting in the formation of a stable complex. GrpE releases ADP from DnaK; ATP binding to DnaK triggers the release of the substrate protein, thus completing the reaction cycle. Several rounds of ATP-dependent interactions between DnaJ, DnaK and GrpE are required for fully efficient folding. Also involved, together with DnaK and GrpE, in the DNA replication of plasmids through activation of initiation proteins. This is Chaperone protein DnaJ from Macrococcus caseolyticus (strain JCSC5402) (Macrococcoides caseolyticum).